The chain runs to 526 residues: Arp2/3 complex-activating protein rickA (526 aa).

Residues 305–356 (TTSSIAKPLENNVTPPPPLTKNNIPPPPPPPPLSKNNILPPPPPPMPTMAPA) are disordered. Residues 318-352 (TPPPPLTKNNIPPPPPPPPLSKNNILPPPPPPMPT) show a composition bias toward pro residues. WH2 domains are found at residues 383–400 (DTSD…LRKV) and 410–427 (SRDL…LRKV). Disordered stretches follow at residues 425–452 (RKVE…SKPN) and 464–526 (MEMS…FVRS). Residues 448–484 (VSKPNGVASILARRVAMEMSDSSSSSGSESDSGNWSD) form a central and acidic domains region. Positions 464 to 480 (MEMSDSSSSSGSESDSG) are enriched in low complexity. Polar residues-rich tracts occupy residues 481–491 (NWSDASVNSNK) and 506–526 (TTHA…FVRS).

As to quaternary structure, homodimer.

Its subcellular location is the cell surface. Its function is as follows. Recruits and activates the Arp2/3 complex, which in turn leads to actin polymerization, promoting Rickettsia motility during infection. This Rickettsia felis (strain ATCC VR-1525 / URRWXCal2) (Rickettsia azadi) protein is Arp2/3 complex-activating protein rickA (rickA).